An 853-amino-acid chain; its full sequence is Translation initiation factor IF-2 (853 aa).

Disordered stretches follow at residues methionine 1–glycine 68 and leucine 94–serine 265. The segment covering arginine 20 to histidine 32 has biased composition (polar residues). Over residues leucine 94–serine 161 the composition is skewed to basic and acidic residues. A compositionally biased stretch (low complexity) spans alanine 163–alanine 176. 2 stretches are compositionally biased toward basic and acidic residues: residues proline 196–arginine 219 and arginine 245–serine 265. One can recognise a tr-type G domain in the interval proline 347–glutamate 515. The interval glycine 356–threonine 363 is G1. Glycine 356–threonine 363 serves as a coordination point for GTP. A G2 region spans residues glycine 381–histidine 385. Residues aspartate 403–glycine 406 are G3. GTP-binding positions include aspartate 403–histidine 407 and threonine 457–aspartate 460. The segment at threonine 457–aspartate 460 is G4. Residues serine 493 to lysine 495 are G5.

It belongs to the TRAFAC class translation factor GTPase superfamily. Classic translation factor GTPase family. IF-2 subfamily.

It is found in the cytoplasm. Functionally, one of the essential components for the initiation of protein synthesis. Protects formylmethionyl-tRNA from spontaneous hydrolysis and promotes its binding to the 30S ribosomal subunits. Also involved in the hydrolysis of GTP during the formation of the 70S ribosomal complex. The polypeptide is Translation initiation factor IF-2 (Hyphomonas neptunium (strain ATCC 15444)).